Here is a 66-residue protein sequence, read N- to C-terminus: Large ribosomal subunit protein bL35 (66 aa).

The segment covering 1 to 16 (MPKQKTHRASAKRFKR) has biased composition (basic residues). A disordered region spans residues 1-21 (MPKQKTHRASAKRFKRTGSGG).

The protein belongs to the bacterial ribosomal protein bL35 family.

The chain is Large ribosomal subunit protein bL35 from Streptococcus pneumoniae serotype 2 (strain D39 / NCTC 7466).